Consider the following 334-residue polypeptide: Beta-hexosaminidase (334 aa).

Substrate is bound by residues D60, R68, R133, and 163–164 (KH). H176 (proton donor/acceptor) is an active-site residue. D247 functions as the Nucleophile in the catalytic mechanism.

The protein belongs to the glycosyl hydrolase 3 family. NagZ subfamily.

It localises to the cytoplasm. The catalysed reaction is Hydrolysis of terminal non-reducing N-acetyl-D-hexosamine residues in N-acetyl-beta-D-hexosaminides.. Its pathway is cell wall biogenesis; peptidoglycan recycling. Its function is as follows. Plays a role in peptidoglycan recycling by cleaving the terminal beta-1,4-linked N-acetylglucosamine (GlcNAc) from peptide-linked peptidoglycan fragments, giving rise to free GlcNAc, anhydro-N-acetylmuramic acid and anhydro-N-acetylmuramic acid-linked peptides. The polypeptide is Beta-hexosaminidase (Xanthomonas euvesicatoria pv. vesicatoria (strain 85-10) (Xanthomonas campestris pv. vesicatoria)).